The primary structure comprises 160 residues: Eukaryotic translation initiation factor 5A-4 (160 aa).

Basic and acidic residues predominate over residues 1-12; the sequence is MSDEEHHFESKA. Positions 1–21 are disordered; it reads MSDEEHHFESKADAGASKTYP. Residue Lys-52 is modified to Hypusine.

It belongs to the eIF-5A family. Post-translationally, lys-52 undergoes hypusination, a unique post-translational modification that consists in the addition of a butylamino group from spermidine to lysine side chain, leading to the formation of the unusual amino acid hypusine. eIF-5As are the only known proteins to undergo this modification, which is essential for their function.

Translation factor that promotes translation elongation and termination, particularly upon ribosome stalling at specific amino acid sequence contexts. Binds between the exit (E) and peptidyl (P) site of the ribosome and promotes rescue of stalled ribosome: specifically required for efficient translation of polyproline-containing peptides as well as other motifs that stall the ribosome. Acts as a ribosome quality control (RQC) cofactor by joining the RQC complex to facilitate peptidyl transfer during CAT tailing step. In Solanum lycopersicum (Tomato), this protein is Eukaryotic translation initiation factor 5A-4.